A 620-amino-acid chain; its full sequence is 1-deoxy-D-xylulose-5-phosphate synthase (620 aa).

Residues His80 and 121 to 123 (GHS) each bind thiamine diphosphate. Asp152 is a Mg(2+) binding site. Residues 153 to 154 (GA), Asn181, Tyr288, and Glu370 each bind thiamine diphosphate. Asn181 contributes to the Mg(2+) binding site.

The protein belongs to the transketolase family. DXPS subfamily. As to quaternary structure, homodimer. It depends on Mg(2+) as a cofactor. Thiamine diphosphate serves as cofactor.

The enzyme catalyses D-glyceraldehyde 3-phosphate + pyruvate + H(+) = 1-deoxy-D-xylulose 5-phosphate + CO2. Its pathway is metabolic intermediate biosynthesis; 1-deoxy-D-xylulose 5-phosphate biosynthesis; 1-deoxy-D-xylulose 5-phosphate from D-glyceraldehyde 3-phosphate and pyruvate: step 1/1. Functionally, catalyzes the acyloin condensation reaction between C atoms 2 and 3 of pyruvate and glyceraldehyde 3-phosphate to yield 1-deoxy-D-xylulose-5-phosphate (DXP). The chain is 1-deoxy-D-xylulose-5-phosphate synthase from Escherichia coli O157:H7.